A 458-amino-acid polypeptide reads, in one-letter code: N-acetylgalactosamine kinase (458 aa).

Residues arginine 43, glutamate 49, histidine 50, and aspartate 52 each coordinate alpha-D-galactose. 3 residues coordinate ATP: glycine 143, serine 145, and serine 146. Aspartate 190 serves as a coordination point for alpha-D-galactose. Aspartate 190 functions as the Proton acceptor in the catalytic mechanism. ATP contacts are provided by asparagine 233 and lysine 234.

The protein belongs to the GHMP kinase family. GalK subfamily. Monomer.

The enzyme catalyses N-acetyl-alpha-D-galactosamine + ATP = N-acetyl-alpha-D-galactosamine 1-phosphate + ADP + H(+). In terms of biological role, acts on GalNAc. Also acts as a galactokinase when galactose is present at high concentrations. This chain is N-acetylgalactosamine kinase (Galk2), found in Mus musculus (Mouse).